The primary structure comprises 115 residues: Na(+)/H(+) antiporter subunit C1 (115 aa).

3 helical membrane passes run 1–21 (MEILMIFVCGILTAMSVYLIL), 28–48 (IIIGTTLQTHTANLFLITMGG), and 72–92 (LILTAIVISFSVTAFFLVLAF).

Belongs to the CPA3 antiporters (TC 2.A.63) subunit C family. As to quaternary structure, may form a heterooligomeric complex that consists of seven subunits: mnhA1, mnhB1, mnhC1, mnhD1, mnhE1, mnhF1 and mnhG1.

Its subcellular location is the cell membrane. Its function is as follows. Mnh complex is a Na(+)/H(+) antiporter involved in Na(+) excretion. The protein is Na(+)/H(+) antiporter subunit C1 (mnhC1) of Staphylococcus saprophyticus subsp. saprophyticus (strain ATCC 15305 / DSM 20229 / NCIMB 8711 / NCTC 7292 / S-41).